A 315-amino-acid polypeptide reads, in one-letter code: Epithelial cell adhesion molecule (315 aa).

Positions 1-23 (MAPPKALAFGLLLAVVTATLAAA) are cleaved as a signal peptide. Residues 24–266 (QKDCVCNNYK…APEFSMQGLT (243 aa)) are Extracellular-facing. Disulfide bonds link cysteine 27/cysteine 46, cysteine 29/cysteine 59, cysteine 38/cysteine 48, cysteine 66/cysteine 99, cysteine 110/cysteine 116, and cysteine 118/cysteine 135. A Thyroglobulin type-1 domain is found at 63–135 (ASKCLVMKAE…RTDKDTEITC (73 aa)). A glycan (N-linked (GlcNAc...) asparagine) is linked at asparagine 111. Asparagine 198 carries an N-linked (GlcNAc...) asparagine glycan. Residues 267-289 (AGIIAVIVVVVLAVIAGIVVLVI) form a helical membrane-spanning segment. Residues 290–315 (STRKRSAKYEKAEIKEMGEIHRELNA) are Cytoplasmic-facing.

Belongs to the EPCAM family. As to quaternary structure, monomer. Interacts with phosphorylated CLDN7. In terms of processing, glycosylation at Asn-198 is crucial for protein stability.

It is found in the lateral cell membrane. The protein localises to the cell junction. Its subcellular location is the tight junction. Its function is as follows. May act as a physical homophilic interaction molecule between intestinal epithelial cells (IECs) and intraepithelial lymphocytes (IELs) at the mucosal epithelium for providing immunological barrier as a first line of defense against mucosal infection. Plays a role in embryonic stem cells proliferation and differentiation. Up-regulates the expression of FABP5, MYC and cyclins A and E. This is Epithelial cell adhesion molecule (Epcam) from Rattus norvegicus (Rat).